We begin with the raw amino-acid sequence, 523 residues long: GMP synthase [glutamine-hydrolyzing] (523 aa).

The region spanning 9–198 (PVLVVDYGAQ…LTEIAGLEQN (190 aa)) is the Glutamine amidotransferase type-1 domain. Cys-86 (nucleophile) is an active-site residue. Residues His-172 and Glu-174 contribute to the active site. The region spanning 199 to 397 (WTAANIAEEL…LGLPEVIVAR (199 aa)) is the GMPS ATP-PPase domain. 227–233 (SGGVDSA) is an ATP binding site.

Homodimer.

It carries out the reaction XMP + L-glutamine + ATP + H2O = GMP + L-glutamate + AMP + diphosphate + 2 H(+). It participates in purine metabolism; GMP biosynthesis; GMP from XMP (L-Gln route): step 1/1. Its function is as follows. Catalyzes the synthesis of GMP from XMP. The chain is GMP synthase [glutamine-hydrolyzing] from Corynebacterium efficiens (strain DSM 44549 / YS-314 / AJ 12310 / JCM 11189 / NBRC 100395).